The sequence spans 61 residues: Small ribosomal subunit protein uS14 (61 aa).

The Zn(2+) site is built by C24, C27, C40, and C43.

This sequence belongs to the universal ribosomal protein uS14 family. Zinc-binding uS14 subfamily. In terms of assembly, part of the 30S ribosomal subunit. Contacts proteins S3 and S10. It depends on Zn(2+) as a cofactor.

In terms of biological role, binds 16S rRNA, required for the assembly of 30S particles and may also be responsible for determining the conformation of the 16S rRNA at the A site. The sequence is that of Small ribosomal subunit protein uS14 from Symbiobacterium thermophilum (strain DSM 24528 / JCM 14929 / IAM 14863 / T).